We begin with the raw amino-acid sequence, 879 residues long: Phosphoenolpyruvate carboxylase (879 aa).

Catalysis depends on residues His141 and Lys546.

The protein belongs to the PEPCase type 1 family. The cofactor is Mg(2+).

It carries out the reaction oxaloacetate + phosphate = phosphoenolpyruvate + hydrogencarbonate. In terms of biological role, forms oxaloacetate, a four-carbon dicarboxylic acid source for the tricarboxylic acid cycle. The chain is Phosphoenolpyruvate carboxylase from Stutzerimonas stutzeri (strain A1501) (Pseudomonas stutzeri).